The sequence spans 143 residues: Large ribosomal subunit protein uL11 (143 aa).

This sequence belongs to the universal ribosomal protein uL11 family. As to quaternary structure, part of the ribosomal stalk of the 50S ribosomal subunit. Interacts with L10 and the large rRNA to form the base of the stalk. L10 forms an elongated spine to which L12 dimers bind in a sequential fashion forming a multimeric L10(L12)X complex. In terms of processing, one or more lysine residues are methylated.

Forms part of the ribosomal stalk which helps the ribosome interact with GTP-bound translation factors. This Clavibacter michiganensis subsp. michiganensis (strain NCPPB 382) protein is Large ribosomal subunit protein uL11.